The sequence spans 1039 residues: Serine/threonine-protein kinase Tao (1039 aa).

The Protein kinase domain occupies 27–280 (FEDLREIGHG…SAKLLTHAYV (254 aa)). ATP-binding positions include 33–41 (IGHGSFGAV) and Lys56. The active-site Proton acceptor is Asp150. Disordered stretches follow at residues 324-457 (SAVG…NSAS), 485-508 (GGGGTGTGGSGGGSPASGGPLADR), 629-648 (HQQDVERRAKQTSAAEKKLH), and 677-707 (WKRELSMDESTPKRQRDLTLQSQKDNLKQHE). Residues 341–350 (SSKSNSITSE) show a composition bias toward polar residues. Over residues 359-376 (SAASSQSSSSNSIPAAAQ) the composition is skewed to low complexity. A compositionally biased stretch (basic residues) spans 377-387 (NHHHIAAHHHQ). Composition is skewed to low complexity over residues 388-397 (QAASAAVAAA) and 413-429 (PSGQQGQPVPPGAVSRN). The span at 444–454 (HSMNNNVTPTN) shows a compositional bias: polar residues. The span at 485-500 (GGGGTGTGGSGGGSPA) shows a compositional bias: gly residues. Coiled coils occupy residues 631–765 (QDVE…MLLK) and 835–993 (KQFR…DNES). A compositionally biased stretch (basic and acidic residues) spans 677 to 693 (WKRELSMDESTPKRQRD).

Belongs to the protein kinase superfamily. STE Ser/Thr protein kinase family. STE20 subfamily. Interacts with Schip1; the interaction enhances Tao kinase activity. Requires Mg(2+) as cofactor. In terms of processing, autophosphorylated. In terms of tissue distribution, in the posterior midgut, expressed in almost all intestinal cell types including intestinal stem cells and enterocytes (at protein level). Maternally expressed, ubiquitously distributed in the egg and early embryo and enriched in the germ plasm at the posterior pole of the early embryo including the pole cells.

It is found in the cytoplasm. The protein resides in the cytoskeleton. It localises to the spindle. Its subcellular location is the membrane. The protein localises to the perikaryon. It is found in the cell cortex. The protein resides in the cell projection. It localises to the axon. The catalysed reaction is L-seryl-[protein] + ATP = O-phospho-L-seryl-[protein] + ADP + H(+). The enzyme catalyses L-threonyl-[protein] + ATP = O-phospho-L-threonyl-[protein] + ADP + H(+). Serine/threonine-protein kinase which regulates the Hippo/SWH (Sav/Wts/Hpo) signaling pathway, a signaling pathway that plays a pivotal role in organ size control and tumor suppression by restricting proliferation and promoting apoptosis. The core of this pathway is composed of a kinase cascade wherein Hippo (hpo), in complex with its regulatory protein Salvador (sav), phosphorylates and activates Warts (wts) in complex with its regulatory protein Mats, which in turn phosphorylates and inactivates the Yorkie (yki) oncoprotein. In imaginal cells, phosphorylates and activates hpo and leads to repression of yki. In the midgut, negatively regulates the proliferation of intestinal stem cells through the Hippo/SWH pathway. Independent of the hippo/SWH pathway, regulates epithelial morphogenesis in follicle cells by promoting the endocytosis of Fas2 and reducing lateral adhesion between epithelial cells which, in turn, permits shrinking of the lateral membrane and initiates morphogenesis of the squamous epithelium. Required for the development of both the mushroom body and the ellipsoid body in the brain and may act as a negative regulator of the par-1 kinase. Negatively regulates the JNK pathway which increases sensitivity to ethanol exposure. Plays a role in the control of cell shape by negatively regulating the growth of microtubule plus-ends as they contact the actin-rich cell cortex. Required for the induction of apoptosis in pole cells by promoting expression of skl which enhances activity of the apoptosis activator hid. Functionally, induces in vitro expression of large, highly dynamic, microtubule-dependent lamellopodia-like cytoplasmic expansions which constantly probe the environment. Its function is as follows. Induces in vitro expression of actin-dependent filopodia-like cytoplasmic protrusions which firmly attach to the substrate. Antagonizes the activity of isoform D. In Drosophila melanogaster (Fruit fly), this protein is Serine/threonine-protein kinase Tao.